The following is a 309-amino-acid chain: Maintenance of mitochondrial morphology protein 1 (309 aa).

The Lumenal portion of the chain corresponds to 1–16 (MGNAYIFSLQPTFTQG). A helical membrane pass occupies residues 17–37 (LILGQFSILFLLVLVLKYLFF). The Cytoplasmic portion of the chain corresponds to 38–309 (DTVSDHAYRT…EQQAGELPVN (272 aa)). The SMP-LTD domain maps to 84–293 (ECESADWLNA…LPGLASVSEV (210 aa)).

The protein belongs to the MMM1 family. Homodimer. Component of the ER-mitochondria encounter structure (ERMES) or MDM complex, composed of MMM1, MDM10, MDM12 and MDM34. An MMM1 homodimer associates with one molecule of MDM12 on each side in a pairwise head-to-tail manner, and the SMP-LTD domains of MMM1 and MDM12 generate a continuous hydrophobic tunnel for phospholipid trafficking.

It localises to the endoplasmic reticulum membrane. Its function is as follows. Component of the ERMES/MDM complex, which serves as a molecular tether to connect the endoplasmic reticulum (ER) and mitochondria. Components of this complex are involved in the control of mitochondrial shape and protein biogenesis, and function in nonvesicular lipid trafficking between the ER and mitochondria. The MDM12-MMM1 subcomplex functions in the major beta-barrel assembly pathway that is responsible for biogenesis of all outer membrane beta-barrel proteins, and acts in a late step after the SAM complex. The MDM10-MDM12-MMM1 subcomplex further acts in the TOM40-specific pathway after the action of the MDM12-MMM1 complex. Essential for establishing and maintaining the structure of mitochondria and maintenance of mtDNA nucleoids. The polypeptide is Maintenance of mitochondrial morphology protein 1 (Postia placenta (strain ATCC 44394 / Madison 698-R) (Brown rot fungus)).